A 203-amino-acid chain; its full sequence is MTTAVGTPGSAITQRVHSLNRPNMVSVGTIIWLSSELMFFAGLFAMYFVARAQANGNWPPEPTELNLKLAVPVTAVLVASSFTCQMGVFAAEKGDVFGLRRWYFITLLMGAFFVAGQGYEYYHLVHEGTSISSSAYGSVFYITTGFHGLHVIGGLIAFVFLLIRTKVSKFTPAQATAAIVVSYYWHFVDIVWIGLFATIYFVR.

Transmembrane regions (helical) follow at residues 30–50 (IIWL…YFVA), 69–89 (LAVP…MGVF), 102–122 (WYFI…YEYY), 142–162 (ITTG…VFLL), and 179–199 (IVVS…FATI).

Belongs to the cytochrome c oxidase subunit 3 family.

It localises to the cell membrane. It catalyses the reaction 4 Fe(II)-[cytochrome c] + O2 + 8 H(+)(in) = 4 Fe(III)-[cytochrome c] + 2 H2O + 4 H(+)(out). This is Probable cytochrome c oxidase subunit 3 (ctaE) from Nocardia farcinica (strain IFM 10152).